The sequence spans 289 residues: Ribosomal RNA small subunit methyltransferase A (289 aa).

Asparagine 21, leucine 23, glycine 48, glutamate 69, aspartate 94, and asparagine 120 together coordinate S-adenosyl-L-methionine.

Belongs to the class I-like SAM-binding methyltransferase superfamily. rRNA adenine N(6)-methyltransferase family. RsmA subfamily.

It is found in the cytoplasm. The enzyme catalyses adenosine(1518)/adenosine(1519) in 16S rRNA + 4 S-adenosyl-L-methionine = N(6)-dimethyladenosine(1518)/N(6)-dimethyladenosine(1519) in 16S rRNA + 4 S-adenosyl-L-homocysteine + 4 H(+). In terms of biological role, specifically dimethylates two adjacent adenosines (A1518 and A1519) in the loop of a conserved hairpin near the 3'-end of 16S rRNA in the 30S particle. May play a critical role in biogenesis of 30S subunits. This chain is Ribosomal RNA small subunit methyltransferase A, found in Actinobacillus pleuropneumoniae serotype 7 (strain AP76).